The sequence spans 289 residues: MAATFFGEVVKAPCRAGTEEEEEEEEQSRRDTPEDREVRRQLARKREVRLLRRQTETSLEAVLLETHPCSKFIIAVGSNATAFLSAFVMNSGVWEEVGCAKLWNEWCRTTDTVRLSPTDVFCVFYQLKSDPSVFLCQCSCYIAEDQQFQWLEKVFGFQPRKSMQVTVLTCRHITDYKTPESTCSLSSPFLRALKTQTFKDALCCPLLEQPNIVHDLSAAVLSYCQVWKIPAVLYLCYTDVMKLDRVTVEAFKPLLSSRSLKCLVKNIPESTEILKKLMTTNEIQSNIYT.

The tract at residues 1 to 38 (MAATFFGEVVKAPCRAGTEEEEEEEEQSRRDTPEDREV) is disordered. Residue Ala-2 is modified to N-acetylalanine. Phosphothreonine is present on Thr-18. Over residues 27–38 (QSRRDTPEDREV) the composition is skewed to basic and acidic residues. A Phosphothreonine modification is found at Thr-55. A Phosphoserine modification is found at Ser-181. At Lys-265 the chain carries N6-acetyllysine.

The protein belongs to the PSMG1 family. Forms a heterodimer with PSMG2. The PSMG1-PSMG2 heterodimer interacts directly with the PSMA5 and PSMA7 proteasome alpha subunits. Degraded by the proteasome upon completion of 20S proteasome maturation. As to expression, highly expressed in testis with moderate expression in brain, liver and kidney and low levels in heart, skeletal muscle and pancreas.

Its subcellular location is the cytoplasm. The protein localises to the endoplasmic reticulum. Functionally, chaperone protein which promotes assembly of the 20S proteasome as part of a heterodimer with PSMG2. The PSMG1-PSMG2 heterodimer binds to the PSMA5 and PSMA7 proteasome subunits, promotes assembly of the proteasome alpha subunits into the heteroheptameric alpha ring and prevents alpha ring dimerization. This Mus musculus (Mouse) protein is Proteasome assembly chaperone 1.